The sequence spans 342 residues: Anthranilate phosphoribosyltransferase (342 aa).

Residues Gly79, 82-83 (GD), Thr87, 89-92 (NIST), 107-115 (KHCNQRISS), and Ser119 contribute to the 5-phospho-alpha-D-ribose 1-diphosphate site. Gly79 lines the anthranilate pocket. Ser91 lines the Mg(2+) pocket. Residue Asn110 coordinates anthranilate. Anthranilate is bound at residue Arg165. Asp223 and Glu224 together coordinate Mg(2+).

This sequence belongs to the anthranilate phosphoribosyltransferase family. Homodimer. Requires Mg(2+) as cofactor.

The catalysed reaction is N-(5-phospho-beta-D-ribosyl)anthranilate + diphosphate = 5-phospho-alpha-D-ribose 1-diphosphate + anthranilate. Its pathway is amino-acid biosynthesis; L-tryptophan biosynthesis; L-tryptophan from chorismate: step 2/5. In terms of biological role, catalyzes the transfer of the phosphoribosyl group of 5-phosphorylribose-1-pyrophosphate (PRPP) to anthranilate to yield N-(5'-phosphoribosyl)-anthranilate (PRA). This chain is Anthranilate phosphoribosyltransferase, found in Buchnera aphidicola subsp. Acyrthosiphon pisum (strain Tuc7).